The sequence spans 87 residues: Small ribosomal subunit protein uS17 (87 aa).

It belongs to the universal ribosomal protein uS17 family. As to quaternary structure, part of the 30S ribosomal subunit.

In terms of biological role, one of the primary rRNA binding proteins, it binds specifically to the 5'-end of 16S ribosomal RNA. The polypeptide is Small ribosomal subunit protein uS17 (Thiobacillus denitrificans (strain ATCC 25259 / T1)).